The primary structure comprises 353 residues: Guanine nucleotide-binding protein subunit beta-5 (353 aa).

WD repeat units follow at residues 61–100 (GHGNKVLCMDWCKDKRRIVSSSQDGKVIVWDSFTTNKEHA), 103–142 (MPCTWVMACAYAPSGCAIACGGLDNKCSVYPLTFDKNENM), 151–192 (MHTN…QSFH), 194–236 (HGAD…QAFE), 237–276 (THESDVNSVRYYPSGDAFASGSDDATCRLYDLRADREVAI), 278–320 (SKES…RVSI), and 323–352 (GHENRVSTLRVSPDGTAFCSGSWDHTLRVW).

Belongs to the WD repeat G protein beta family. Component of a complex composed of RGS9 (isoform RGS9-1), GNB5 and RGS9BP; within this complex, the presence of GNB5 stabilizes both itself and RGS9 and increases RGS9 GTPase-activating protein (GAP) activity. Interacts with RGS7, forming the RGS7-GNB5 complex; within this complex, the presence of GNB5 increases RGS7 GTPase-activating protein (GAP) activity. Interacts with GPR158; promotes the GTPase activator activity of the RGS7-GNB5 complex in absence of glycine, in contrast GTPase activator activity of the RGS7-GNB5 complex is inhibited in presence of glycine. Interacts with RGS6. In terms of tissue distribution, detected in brain.

It localises to the membrane. Enhances GTPase-activating protein (GAP) activity of regulator of G protein signaling (RGS) proteins, such as RGS7 and RGS9, hence involved in the termination of the signaling initiated by the G protein coupled receptors (GPCRs) by accelerating the GTP hydrolysis on the G-alpha subunits, thereby promoting their inactivation. Increases RGS7 GTPase-activating protein (GAP) activity, thereby regulating mood and cognition. Increases RGS9 GTPase-activating protein (GAP) activity, hence contributes to the deactivation of G protein signaling initiated by D(2) dopamine receptors. May play an important role in neuronal signaling, including in the parasympathetic, but not sympathetic, control of heart rate. The protein is Guanine nucleotide-binding protein subunit beta-5 (Gnb5) of Rattus norvegicus (Rat).